Consider the following 206-residue polypeptide: Probable GTP-binding protein EngB (206 aa).

The EngB-type G domain maps to 27 to 201 (SGIEVAFAGR…EEKLNQWYSK (175 aa)). GTP is bound by residues 35–42 (GRSNAGKS), 62–66 (GRTQL), 80–83 (DLPG), 147–150 (TKAD), and 180–182 (FSS). The Mg(2+) site is built by Ser-42 and Thr-64.

Belongs to the TRAFAC class TrmE-Era-EngA-EngB-Septin-like GTPase superfamily. EngB GTPase family. It depends on Mg(2+) as a cofactor.

In terms of biological role, necessary for normal cell division and for the maintenance of normal septation. This is Probable GTP-binding protein EngB from Idiomarina loihiensis (strain ATCC BAA-735 / DSM 15497 / L2-TR).